The sequence spans 473 residues: Phosphatidylserine synthase 2 (473 aa).

The disordered stretch occupies residues 1–25 (MRRGERRVAGGSGSESPLLKGRRST). Residues 1–40 (MRRGERRVAGGSGSESPLLKGRRSTESEVYDDGTNTFFWR) are Cytoplasmic-facing. Phosphoserine is present on residues serine 12, serine 14, and serine 16. A helical membrane pass occupies residues 41–61 (AHTLTVLFILTCALGYVTLLE). Topologically, residues 62–74 (ETPQDTAYNTKRG) are lumenal. The chain crosses the membrane as a helical span at residues 75-95 (IVASILVFLCFGVTQAKDGPF). Residues 96–104 (SRPHPAYWR) are Cytoplasmic-facing. A helical transmembrane segment spans residues 105-125 (FWLCVSVVYELFLIFILFQTV). At 126 to 291 (QDGRQFLKYV…EWKPASSLHR (166 aa)) the chain is on the lumenal side. N-linked (GlcNAc...) asparagine glycosylation is present at asparagine 159. The helical transmembrane segment at 292-312 (WLAVCGIILVFLLAELNTFYL) threads the bilayer. Lysine 313 is a topological domain (cytoplasmic). Residues 314 to 334 (FVLWMPPEHYLVLLRLVFFVN) traverse the membrane as a helical segment. Residues 335 to 354 (VGGVAMREIYDFMDELKPHR) lie on the Lumenal side of the membrane. The chain crosses the membrane as a helical span at residues 355 to 375 (KLGQQAWLVAAITVTELLIVV). The Cytoplasmic portion of the chain corresponds to 376–381 (KYDPHT). A helical transmembrane segment spans residues 382-402 (LTLSLPFYISQCWTLGSILVL). Topologically, residues 403 to 473 (TWTVWRFFLR…TAEEGTSAAS (71 aa)) are lumenal. A disordered region spans residues 422 to 473 (RRQKQQSHQARAVNNRDGHPGPDDDLLGTGTAEEEGTTNDGVTAEEGTSAAS).

This sequence belongs to the phosphatidyl serine synthase family. As to expression, highly expressed in testis. Detected at lower levels in kidney and heart.

It localises to the endoplasmic reticulum membrane. The protein localises to the membrane. The enzyme catalyses a 1,2-diacyl-sn-glycero-3-phosphoethanolamine + L-serine = a 1,2-diacyl-sn-glycero-3-phospho-L-serine + ethanolamine. The catalysed reaction is 1-hexadecanoyl-2-(9Z-octadecenoyl)-sn-glycero-3-phosphoethanolamine + L-serine = 1-hexadecanoyl-2-(9Z-octadecenoyl)-sn-glycero-3-phospho-L-serine + ethanolamine. It carries out the reaction 1-hexadecanoyl-2-(4Z,7Z,10Z,13Z,16Z,19Z-docosahexaenoyl)-sn-glycero-3-phosphoethanolamine + L-serine = 1-hexadecanoyl-2-(4Z,7Z,10Z,13Z,16Z,19Z-docosahexaenoyl)-sn-glycero-3-phosphoserine + ethanolamine. It catalyses the reaction 1-octadecanoyl-2-(5Z,8Z,11Z,14Z)-eicosatetraenoyl-sn-glycero-3-phosphoethanolamine + L-serine = 1-octadecanoyl-2-(5Z,8Z,11Z,14Z)-eicosatetraenoyl-sn-glycero-3-phosphoserine + ethanolamine. The enzyme catalyses 1-octadecanoyl-2-(4Z,7Z,10Z,13Z,16Z,19Z-docosahexaenoyl)-sn-glycero-3-phosphoethanolamine + L-serine = 1-octadecanoyl-2-(4Z,7Z,10Z,13Z,16Z,19Z-docosahexaenoyl)-sn-glycero-3-phosphoserine + ethanolamine. The catalysed reaction is 1-(1Z-octadecenyl)-2-(4Z,7Z,10Z,13Z,16Z,19Z-docosahexaenoyl)-sn-glycero-3-phosphoethanolamine + L-serine = 1-(1Z-octadecenyl)-2-(4Z,7Z,10Z,13Z,16Z,19Z-docosahexaenoyl)-sn-glycero-3-phospho-L-serine + ethanolamine. It carries out the reaction 1-octadecanoyl-2-(9Z-octadecenoyl)-sn-glycero-3-phosphoethanolamine + L-serine = 1-octadecanoyl-2-(9Z-octadecenoyl)-sn-glycero-3-phospho-L-serine + ethanolamine. It catalyses the reaction 1-(1Z-octadecenyl)-2-(9Z-octadecenoyl)-sn-glycero-3-phosphoethanolamine + L-serine = 1-(1Z-octadecenyl)-2-(9Z-octadecenoyl)-sn-glycero-3-phospho-L-serine + ethanolamine. The enzyme catalyses 1-(1Z-octadecenyl)-2-(5Z,8Z,11Z,14Z- eicosatetraenoyl)-sn-glycero-3-phosphoethanolamine + L-serine = 1-(1Z-octadecenyl)-2-(5Z,8Z,11Z,14Z-eicosatetraenoyl)-sn-glycero-3-phospho-L-serine + ethanolamine. It participates in phospholipid metabolism; phosphatidylserine biosynthesis. Almost complete inhibition by ethanolamine in both the mitochondria-associated membrane (MAM) and endoplasmic reticulum (ER) per se. Catalyzes a base-exchange reaction in which the polar head group of phosphatidylethanolamine (PE) or phosphatidylcholine (PC) is replaced by L-serine. Catalyzes the conversion of phosphatatidylethanolamine and does not act on phosphatidylcholine. Can utilize both phosphatidylethanolamine (PE) plasmalogen and diacyl PE as substrate and the latter is six times better utilized, indicating the importance of an ester linkage at the sn-1 position. Although it shows no sn-1 fatty acyl preference, exhibits significant preference towards docosahexaenoic acid (22:6n-3) compared with 18:1 or 20:4 at the sn-2 position. This Mus musculus (Mouse) protein is Phosphatidylserine synthase 2 (Ptdss2).